We begin with the raw amino-acid sequence, 508 residues long: Alpha-amylase (508 aa).

An N-terminal signal peptide occupies residues 1-19 (MLSLIIAACCVTVALAGTF). Cysteine 46 and cysteine 102 are joined by a disulfide. Residues asparagine 116, arginine 173, and aspartate 182 each coordinate Ca(2+). Residues cysteine 156 and cysteine 175 are joined by a disulfide bond. Arginine 210 contributes to the chloride binding site. Aspartate 212 acts as the Nucleophile in catalysis. Histidine 216 is a binding site for Ca(2+). Catalysis depends on glutamate 248, which acts as the Proton donor. Chloride is bound by residues asparagine 311 and arginine 349. Disulfide bonds link cysteine 383–cysteine 389 and cysteine 455–cysteine 467.

The protein belongs to the glycosyl hydrolase 13 family. In terms of assembly, monomer. It depends on Ca(2+) as a cofactor. The cofactor is chloride.

The enzyme catalyses Endohydrolysis of (1-&gt;4)-alpha-D-glucosidic linkages in polysaccharides containing three or more (1-&gt;4)-alpha-linked D-glucose units.. This Pecten maximus (King scallop) protein is Alpha-amylase.